The following is a 396-amino-acid chain: Elongation factor Tu (396 aa).

The tr-type G domain occupies 10 to 205; that stretch reads KPHVNIGTIG…AVDESIPDPV (196 aa). The G1 stretch occupies residues 19 to 26; the sequence is GHVDHGKT. Residue 19-26 coordinates GTP; it reads GHVDHGKT. Thr26 lines the Mg(2+) pocket. The segment at 62–66 is G2; the sequence is GITIN. Residues 83-86 are G3; the sequence is DAPG. Residues 83-87 and 138-141 contribute to the GTP site; these read DAPGH and NKAD. The interval 138–141 is G4; sequence NKAD. The interval 175–177 is G5; that stretch reads SAL.

The protein belongs to the TRAFAC class translation factor GTPase superfamily. Classic translation factor GTPase family. EF-Tu/EF-1A subfamily. As to quaternary structure, monomer.

It is found in the cytoplasm. The enzyme catalyses GTP + H2O = GDP + phosphate + H(+). GTP hydrolase that promotes the GTP-dependent binding of aminoacyl-tRNA to the A-site of ribosomes during protein biosynthesis. This Rhodococcus erythropolis (strain PR4 / NBRC 100887) protein is Elongation factor Tu.